The chain runs to 193 residues: Intracellular heme transport protein HutX (193 aa).

Tyr-116 contacts heme.

As to quaternary structure, homodimer. Interacts with HutZ.

The protein resides in the cytoplasm. Functionally, binds heme. Heme is transferred to the heme-degrading enzyme HutZ via a specific protein-protein interaction. In Vibrio cholerae serotype O1 (strain ATCC 39315 / El Tor Inaba N16961), this protein is Intracellular heme transport protein HutX.